The primary structure comprises 493 residues: Probable phospho-2-dehydro-3-deoxyheptonate aldolase, chloroplastic (493 aa).

A chloroplast-targeting transit peptide spans 1–58 (MAMSNTSALASKLLPSCKPHQPTLTFFSPSTTCQKKPRSSRPISAAVHVTQPPKTPIS).

This sequence belongs to the class-II DAHP synthase family.

It localises to the plastid. The protein localises to the chloroplast. It catalyses the reaction D-erythrose 4-phosphate + phosphoenolpyruvate + H2O = 7-phospho-2-dehydro-3-deoxy-D-arabino-heptonate + phosphate. It functions in the pathway metabolic intermediate biosynthesis; chorismate biosynthesis; chorismate from D-erythrose 4-phosphate and phosphoenolpyruvate: step 1/7. The polypeptide is Probable phospho-2-dehydro-3-deoxyheptonate aldolase, chloroplastic (DHS1) (Catharanthus roseus (Madagascar periwinkle)).